The sequence spans 112 residues: uncharacterized protein (112 aa).

Over residues 1 to 11 (MAESVASSESL) the composition is skewed to polar residues. Residues 1-32 (MAESVASSESLPQMKPEEPESKKSPSREAIPK) are disordered. Over residues 15–31 (KPEEPESKKSPSREAIP) the composition is skewed to basic and acidic residues. A helical transmembrane segment spans residues 81 to 101 (VVFIFMIAIMSMLVIGLVVCG).

It localises to the membrane. This is an uncharacterized protein from Encephalitozoon cuniculi (strain GB-M1) (Microsporidian parasite).